The following is a 51-amino-acid chain: Sperm protamine P1 (51 aa).

Belongs to the protamine P1 family. Testis.

It localises to the nucleus. Its subcellular location is the chromosome. Its function is as follows. Protamines substitute for histones in the chromatin of sperm during the haploid phase of spermatogenesis. They compact sperm DNA into a highly condensed, stable and inactive complex. This chain is Sperm protamine P1 (PRM1), found in Colobus guereza (Mantled guereza).